Here is a 359-residue protein sequence, read N- to C-terminus: Acetoin catabolism protein X (359 aa).

The protein resides in the cell membrane. It participates in ketone degradation; acetoin degradation. Its function is as follows. Essential for acetoin catabolism. The sequence is that of Acetoin catabolism protein X (acoX) from Cupriavidus necator (strain ATCC 17699 / DSM 428 / KCTC 22496 / NCIMB 10442 / H16 / Stanier 337) (Ralstonia eutropha).